The sequence spans 1100 residues: Collagen alpha-2(I) chain (1100 aa).

Positions glutamine 1 to valine 982 are disordered. 3 stretches are compositionally biased toward low complexity: residues glutamate 122 to proline 170, glutamate 200 to proline 209, and proline 216 to proline 237. Positions phenylalanine 239–glutamine 249 are enriched in pro residues. The segment covering proline 251–alanine 261 has biased composition (low complexity). The span at glycine 268–glycine 277 shows a compositional bias: gly residues. 4 stretches are compositionally biased toward low complexity: residues methionine 333 to alanine 352, serine 358 to alanine 385, alanine 435 to threonine 448, and glutamine 460 to proline 472. Over residues glycine 473–glycine 482 the composition is skewed to gly residues. The span at asparagine 507–glutamine 517 shows a compositional bias: low complexity. Residues glycine 530 to glycine 557 show a composition bias toward gly residues. A compositionally biased stretch (basic and acidic residues) spans lysine 568–proline 579. Over residues proline 633 to aspartate 646 the composition is skewed to low complexity. Gly residues predominate over residues glycine 656–glycine 665. Low complexity-rich tracts occupy residues proline 666–arginine 691, phenylalanine 702–lysine 729, and serine 757–glutamine 775. The segment covering glycine 788–glycine 797 has biased composition (gly residues). Low complexity-rich tracts occupy residues glutamate 798 to proline 820 and alanine 854 to arginine 866. The segment covering glycine 867–glycine 876 has biased composition (gly residues). A compositionally biased stretch (low complexity) spans alanine 877–proline 892. A compositionally biased stretch (basic and acidic residues) spans arginine 893–methionine 907. A compositionally biased stretch (low complexity) spans leucine 916 to asparagine 935. Residues threonine 1071 to lysine 1100 enclose the Fibrillar collagen NC1 domain.

The protein belongs to the fibrillar collagen family.

Its subcellular location is the secreted. It localises to the extracellular space. The protein resides in the extracellular matrix. In Epinephelus caninus (Dogtooth grouper), this protein is Collagen alpha-2(I) chain.